A 420-amino-acid polypeptide reads, in one-letter code: D-tagatose-1,6-bisphosphate aldolase subunit GatZ (420 aa).

Belongs to the GatZ/KbaZ family. GatZ subfamily. Forms a complex with GatY.

Its pathway is carbohydrate metabolism; D-tagatose 6-phosphate degradation; D-glyceraldehyde 3-phosphate and glycerone phosphate from D-tagatose 6-phosphate: step 2/2. Functionally, component of the tagatose-1,6-bisphosphate aldolase GatYZ that is required for full activity and stability of the Y subunit. Could have a chaperone-like function for the proper and stable folding of GatY. When expressed alone, GatZ does not show any aldolase activity. Is involved in the catabolism of galactitol. This Escherichia coli O7:K1 (strain IAI39 / ExPEC) protein is D-tagatose-1,6-bisphosphate aldolase subunit GatZ.